A 279-amino-acid chain; its full sequence is MKVISSIQELRDQLRGQNRTAFVPTMGNLHDGHLSLMRLARQHGDPVVASIFVNRLQFGPNEDFDQYPRTLQDDIEKLQKENVYVLFAPTERDMYPEPQEYRVQPPHDLGDILEGEFRPGFFTGVCTVVTKLMACVQPRVAVFGKKDYQQLMIVRRMCQQLALPVEIIAAETVRDADGLALSSRNRYLSEAERAEAPELAKTLAQVRSAVLGGERDLAAIEQRALAHLAARGWKPDYVSIRRRANLVAPSAAHIEAGEPLVVLTAAKLGATRLIDNLEI.

26–33 contacts ATP; that stretch reads MGNLHDGH. Histidine 33 functions as the Proton donor in the catalytic mechanism. Residue glutamine 57 coordinates (R)-pantoate. Position 57 (glutamine 57) interacts with beta-alanine. 144–147 serves as a coordination point for ATP; the sequence is GKKD. Residue glutamine 150 participates in (R)-pantoate binding. Residues valine 173 and 181-184 contribute to the ATP site; that span reads LSSR.

This sequence belongs to the pantothenate synthetase family. Homodimer.

Its subcellular location is the cytoplasm. It catalyses the reaction (R)-pantoate + beta-alanine + ATP = (R)-pantothenate + AMP + diphosphate + H(+). Its pathway is cofactor biosynthesis; (R)-pantothenate biosynthesis; (R)-pantothenate from (R)-pantoate and beta-alanine: step 1/1. In terms of biological role, catalyzes the condensation of pantoate with beta-alanine in an ATP-dependent reaction via a pantoyl-adenylate intermediate. The protein is Pantothenate synthetase of Burkholderia mallei (strain NCTC 10229).